A 435-amino-acid polypeptide reads, in one-letter code: AMSH-like protease sst2 (435 aa).

Residues 162-181 (TDLLSPDSQKLSKSSSDLPQ) show a composition bias toward low complexity. A disordered region spans residues 162–185 (TDLLSPDSQKLSKSSSDLPQFDYP). Position 192 is a phosphothreonine (threonine 192). In terms of domain architecture, MPN spans 262 to 392 (TIYLPKLLKK…FRLLDPEGLQ (131 aa)). 7 residues coordinate Zn(2+): histidine 341, histidine 343, aspartate 354, histidine 356, cysteine 397, histidine 404, and histidine 406. Residues 341–354 (HTHPTQTCFMSSVD) carry the JAMM motif motif.

It belongs to the peptidase M67C family. Zn(2+) is required as a cofactor.

It is found in the cytoplasm. It localises to the endosome. Zinc metalloprotease that specifically cleaves 'Lys-63'-linked polyubiquitin chains. Does not cleave 'Lys-48'-linked polyubiquitin chains. Plays a role in the multivesicular body (MVB) sorting pathway. Required for ubiquitin-dependent sorting of proteins into the endosome and subsequent trafficking to the vacuole. May regulate MVB sorting through deubiquitination of ubiquitinated ESCRT proteins. The polypeptide is AMSH-like protease sst2 (sst2) (Schizosaccharomyces pombe (strain 972 / ATCC 24843) (Fission yeast)).